We begin with the raw amino-acid sequence, 1086 residues long: Isoleucine--tRNA ligase (1086 aa).

Residues P53–H63 carry the 'HIGH' region motif. Residues K624–R628 carry the 'KMSKS' region motif. An ATP-binding site is contributed by K627.

Belongs to the class-I aminoacyl-tRNA synthetase family. IleS type 2 subfamily. As to quaternary structure, monomer. It depends on Zn(2+) as a cofactor.

Its subcellular location is the cytoplasm. It catalyses the reaction tRNA(Ile) + L-isoleucine + ATP = L-isoleucyl-tRNA(Ile) + AMP + diphosphate. Its function is as follows. Catalyzes the attachment of isoleucine to tRNA(Ile). As IleRS can inadvertently accommodate and process structurally similar amino acids such as valine, to avoid such errors it has two additional distinct tRNA(Ile)-dependent editing activities. One activity is designated as 'pretransfer' editing and involves the hydrolysis of activated Val-AMP. The other activity is designated 'posttransfer' editing and involves deacylation of mischarged Val-tRNA(Ile). The polypeptide is Isoleucine--tRNA ligase (Rickettsia prowazekii (strain Madrid E)).